The sequence spans 630 residues: MDLTQIQNPSFLKDMSISELEELSEDIRKFLIEELSQTGGHIAPNLGVVELTIALHTLFDSPKDKFLWDVGHQSYVHKILTGRAKEFRTLRQYKGLCGFPKRCESEHDVWETGHSSTSLSAAMGMALARDLKKTDEYVIPIIGDGALTGGMALEALNHIGHEKTDMIVILNDNEMSIAPNVGALHNVLGRLRTAGKYQWVKDELEYILKKIPAVGGKVAATAEKIKDSLKYLLVSGVFFEELGFTYLGPVDGHDYEKLFETLQYAKKTKGPVLVHVITKKGKGYKPAESDVIGTWHGTGPYKIESGDFVKPKEVAPAWSAVVSETVRKLARVDERIVAITPAMPVGSKLEKFHQEFPNRMIDVGIAEQHATTMAAGMATQGMKPFLAIYSTFLQRAYDQVVHDICRQNLNVFIGIDRSGLVGADGETHQGVFDIAFLRHLPNIVLMMPKDENEGQHLVYTAMQYEDGPIALRYPRGNGLGVPMDDEFKVIPIGTWETLREGTQAAIVTFGTTIPMAMEAAERLGKAGVSVKVVNARFIKPMDEAYLHDLLGKNIPILTIEEACLIGGFGSGVMEFAAEHGYHSALIERMGIPDYFIEHGSVTKLLEEIGLTTDAVVDRIHTMIPSKQKRA.

Residues His72 and 113–115 contribute to the thiamine diphosphate site; that span reads GHS. Mg(2+) is bound at residue Asp144. Residues 145 to 146, Asn173, Tyr284, and Glu367 contribute to the thiamine diphosphate site; that span reads GA. Position 173 (Asn173) interacts with Mg(2+).

The protein belongs to the transketolase family. DXPS subfamily. In terms of assembly, homodimer. The cofactor is Mg(2+). Requires thiamine diphosphate as cofactor.

The catalysed reaction is D-glyceraldehyde 3-phosphate + pyruvate + H(+) = 1-deoxy-D-xylulose 5-phosphate + CO2. It participates in metabolic intermediate biosynthesis; 1-deoxy-D-xylulose 5-phosphate biosynthesis; 1-deoxy-D-xylulose 5-phosphate from D-glyceraldehyde 3-phosphate and pyruvate: step 1/1. In terms of biological role, catalyzes the acyloin condensation reaction between C atoms 2 and 3 of pyruvate and glyceraldehyde 3-phosphate to yield 1-deoxy-D-xylulose-5-phosphate (DXP). In Bacillus cytotoxicus (strain DSM 22905 / CIP 110041 / 391-98 / NVH 391-98), this protein is 1-deoxy-D-xylulose-5-phosphate synthase.